The primary structure comprises 1161 residues: Nuclear receptor-interacting protein 1 (1161 aa).

The interaction with ZNF366 stretch occupies residues 1–416; that stretch reads MTHGEELGSD…FESSTPTTID (416 aa). The short motif at 21–25 is the LXXLL motif 1 element; sequence LEGLL. A disordered region spans residues 34–68; sequence GTAINKKSAGHKEEDQNFNLSGSAFPSCQSNGPTV. The span at 50 to 68 shows a compositional bias: polar residues; the sequence is NFNLSGSAFPSCQSNGPTV. Residues 78–335 form a repression domain 1 region; it reads MLHLKKARLL…LNGQARALPA (258 aa). Residue Ser-104 is modified to Phosphoserine. Lys-111 bears the N6-acetyllysine; alternate mark. A Glycyl lysine isopeptide (Lys-Gly) (interchain with G-Cter in SUMO2); alternate cross-link involves residue Lys-111. The LXXLL motif 2 motif lies at 133–137; that stretch reads LASLL. An N6-acetyllysine modification is found at Lys-158. Residue Lys-170 forms a Glycyl lysine isopeptide (Lys-Gly) (interchain with G-Cter in SUMO2) linkage. The LXXLL motif 3 motif lies at 185–189; the sequence is LKTLL. Residues Lys-195 and Lys-198 each participate in a glycyl lysine isopeptide (Lys-Gly) (interchain with G-Cter in SUMO2) cross-link. At Thr-207 the chain carries Phosphothreonine. A Phosphoserine modification is found at Ser-218. The LXXLL motif 4 signature appears at 267 to 271; the sequence is LALLL. An N6-acetyllysine mark is found at Lys-287 and Lys-311. Position 358 is a phosphoserine (Ser-358). A Glycyl lysine isopeptide (Lys-Gly) (interchain with G-Cter in SUMO2) cross-link involves residue Lys-374. Residue Ser-380 is modified to Phosphoserine. Positions 382–386 match the LXXLL motif 5 motif; the sequence is LLHLL. Residues 393 to 436 are disordered; that stretch reads TPMNGHSQNERASSFESSTPTTIDEYSDNNPSFTDDSSGDESSY. Positions 411-701 are repression domain 2; that stretch reads TPTTIDEYSD…PAGPEPGLPG (291 aa). The required for targeting to small nuclear foci stretch occupies residues 432–473; it reads DESSYSNCVPIDLSCKHRIEKPEAERPVSLENLTQSLLNTWD. The short motif at 441-447 is the CTBP-binding; principal site element; the sequence is PIDLSCK. N6-acetyllysine is present on residues Lys-447 and Lys-482. Phosphoserine is present on Ser-488. Positions 501–505 match the LXXLL motif 6 motif; that stretch reads LLQLL. Residue Lys-509 forms a Glycyl lysine isopeptide (Lys-Gly) (interchain with G-Cter in SUMO2) linkage. Polar residues predominate over residues 517–552; that stretch reads NASPQDIHSDGTKFSPQNYTRTSVIESPSTNRTTPV. The tract at residues 517–559 is disordered; that stretch reads NASPQDIHSDGTKFSPQNYTRTSVIESPSTNRTTPVSTPPLYT. Ser-519 carries the phosphoserine modification. The residue at position 529 (Lys-529) is an N6-acetyllysine. A phosphoserine mark is found at Ser-531, Ser-543, and Ser-565. The CTBP-binding motif lies at 566-570; sequence PINLS. Disordered regions lie at residues 604-623, 639-702, and 717-747; these read TKGKESQAEKPAPSEGAQNS, GLQS…LPGC, and LLGNSSKGKNEKKEKTPARDEAPQEHSERAA. An N6-acetyllysine modification is found at Lys-607. Ser-672 is modified (phosphoserine). Positions 714–718 match the LXXLL motif 7 motif; sequence LQLLL. The segment covering 724-747 has biased composition (basic and acidic residues); the sequence is GKNEKKEKTPARDEAPQEHSERAA. The tract at residues 736–886 is repression domain 3; sequence DEAPQEHSER…TAVDTANHHS (151 aa). Positions 754–1161 are interaction with ZNF366; it reads VKIKSEPCDD…NALTIKKESE (408 aa). Glycyl lysine isopeptide (Lys-Gly) (interchain with G-Cter in SUMO2) cross-links involve residues Lys-757 and Lys-803. The residue at position 808 (Ser-808) is a Phosphoserine. An LXXLL motif 8 motif is present at residues 820–824; sequence LSRLL. The segment at 829–848 is disordered; sequence ESYPADEQDKSHRNSELPTL. Glycyl lysine isopeptide (Lys-Gly) (interchain with G-Cter in SUMO2) cross-links involve residues Lys-851 and Lys-902. Residue Lys-932 is modified to N6-acetyllysine; alternate. Lys-932 participates in a covalent cross-link: Glycyl lysine isopeptide (Lys-Gly) (interchain with G-Cter in SUMO2); alternate. The LXXLL motif 9 motif lies at 937–941; the sequence is LKQLL. The CTBP-binding motif lies at 947 to 951; it reads VRDLS. Over residues 950–962 the composition is skewed to basic and acidic residues; that stretch reads LSPHRSDSVPDTK. Residues 950 to 976 are disordered; the sequence is LSPHRSDSVPDTKKKGHKNNAPGSKPE. A Phosphoserine modification is found at Ser-1003. The segment at 1063 to 1076 is ligand-dependent nuclear receptor binding; it reads LTKTNPILYYMLQK. Glycyl lysine isopeptide (Lys-Gly) (interchain with G-Cter in SUMO2) cross-links involve residues Lys-1108, Lys-1118, and Lys-1157. Residues 1121 to 1161 form a repression domain 4 region; it reads FFNLRSPYNSHMGNNASRPHSTNGEVYGLLGNALTIKKESE.

As to quaternary structure, interacts with CTBP1, CTBP2, ERS1, HDAC1, HDAC2, HDAC5, HDAC6, NR2C2, NR3C1, NR3C2, YWHAH, JUN and FOS. Found in a complex with both NR3C1 and YWHAH. Interacts with NR2C1 (sumoylated form and via the ligand-binding domain); the interaction results in promoting the repressor activity of NR2C1. Interacts with RARA and RXRB homodimers and RARA/RXRB heterodimers in the presence of ligand. Interacts with HDAC1 and HDAC3 via its N-terminal domain. Interacts with ZNF366. Interacts with RORA. Post-translationally, acetylation abolishes interaction with CTBP1. Phosphorylation enhances interaction with YWHAH. Acetylation regulates its nuclear translocation and corepressive activity. Expressed in the embryonic placenta. In the adult, expression is strong in the testis and brain. Also expressed at a high level in the white adipose tissue. Expressed constantly but at a weaker level in the adult heart, lung, stomach and kidney. Expressed moderately in the skeletal muscle. Expressed at a low level in the adult spleen, liver and brown adipose tissue. Expressed in the ovary at a high level in granulosa cells and at a lower level in the thecal and interstitial compartments.

Its subcellular location is the nucleus. In terms of biological role, modulates transcriptional repression by nuclear hormone receptors such as NR2C1, thyroid hormone receptor and retinoic acid receptor/RARA. Essential for cumulus expansion and follicle rupture during ovulation. Also controls the balance between fat accumulation and energy expenditure. Positive regulator of the circadian clock gene expression: stimulates transcription of BMAL1, CLOCK and CRY1 by acting as a coactivator for RORA and RORC. Involved in the regulation of ovarian function. Plays a role in renal development. The chain is Nuclear receptor-interacting protein 1 from Mus musculus (Mouse).